The primary structure comprises 1248 residues: Reverse gyrase 1 (1248 aa).

The RG N-terminal-type zinc-finger motif lies at 7-44; it reads IPPSIYLFSCPNCGRSISTYRLLLGSVCNICLEEDKEY. Cysteine 16, cysteine 19, cysteine 34, and cysteine 37 together coordinate Zn(2+). Residues glutamine 92 and 109 to 116 each bind ATP; that span reads APPGLGKT. Positions 96–262 constitute a Helicase ATP-binding domain; sequence IYRLLSGESF…KKYRENTQKN (167 aa). Positions 219–222 match the DEAD box motif; that stretch reads DDVD. The segment at 621 to 1248 is topoisomerase I; that stretch reads QKVKTVLLVV…QVYEEINEIR (628 aa). One can recognise a Toprim domain in the interval 625 to 789; that stretch reads TVLLVVESPN…NIRRAEFHEV (165 aa). Glutamate 631 contacts Mg(2+). The RG C-terminal-type; atypical zinc finger occupies 706–735; that stretch reads IKKCENNHQFTDFFESNKCPRCMTTKVRYD. Residues cysteine 709, histidine 713, cysteine 724, and cysteine 727 each contribute to the Zn(2+) site. Aspartate 758 is a Mg(2+) binding site. The Topo IA-type catalytic domain occupies 805–1248; the sequence is NVNLVKSQLV…QVYEEINEIR (444 aa). The O-(5'-phospho-DNA)-tyrosine intermediate role is filled by tyrosine 965.

This sequence in the N-terminal section; belongs to the DEAD box helicase family. DDVD subfamily. The protein in the C-terminal section; belongs to the type IA topoisomerase family. In terms of assembly, monomer. It depends on Zn(2+) as a cofactor. Mg(2+) serves as cofactor. In terms of processing, the N-terminus is blocked.

It localises to the cytoplasm. The catalysed reaction is ATP + H2O = ADP + phosphate + H(+). Its function is as follows. Modifies the topological state of DNA by introducing positive supercoils in an ATP-dependent process. Increases the linking number in steps of +1. Has a DNA-stimulated ATPase activity; closed circular ssDNA stimulates ATPase much better than dsDNA although negative supercoiled, positive supercoiled and relaxed dsDNA all stimulate ATPase activity. All NTPs permit topoisomerization (relaxation) of negatively supercoiled dsDNA without nucleotide hydrolysis. It transiently cleaves a single DNA strand and remains covalently bound to the 5' DNA end. Acts via a tyrosine residue. Reverse gyrase binds and unwinds DNA independently of ATP binding and DNA cleavage. May be involved in rewinding the DNA strands in the regions of the chromosome that have opened up to allow transcription or replication, probably acts via ssDNA regions of the chromosome. This chain is Reverse gyrase 1, found in Sulfolobus acidocaldarius (strain ATCC 33909 / DSM 639 / JCM 8929 / NBRC 15157 / NCIMB 11770).